The primary structure comprises 96 residues: Co-chaperonin GroES (96 aa).

Belongs to the GroES chaperonin family. In terms of assembly, heptamer of 7 subunits arranged in a ring. Interacts with the chaperonin GroEL.

The protein localises to the cytoplasm. Its function is as follows. Together with the chaperonin GroEL, plays an essential role in assisting protein folding. The GroEL-GroES system forms a nano-cage that allows encapsulation of the non-native substrate proteins and provides a physical environment optimized to promote and accelerate protein folding. GroES binds to the apical surface of the GroEL ring, thereby capping the opening of the GroEL channel. The sequence is that of Co-chaperonin GroES from Geotalea daltonii (strain DSM 22248 / JCM 15807 / FRC-32) (Geobacter daltonii).